The chain runs to 427 residues: Histidinol dehydrogenase (427 aa).

Substrate-binding residues include Ser-232, Gln-254, and His-257. 2 residues coordinate Zn(2+): Gln-254 and His-257. Catalysis depends on proton acceptor residues Glu-322 and His-323. Residues His-323, Asp-356, Glu-410, and His-415 each contribute to the substrate site. Asp-356 is a Zn(2+) binding site. Zn(2+) is bound at residue His-415.

This sequence belongs to the histidinol dehydrogenase family. Zn(2+) serves as cofactor.

It catalyses the reaction L-histidinol + 2 NAD(+) + H2O = L-histidine + 2 NADH + 3 H(+). It functions in the pathway amino-acid biosynthesis; L-histidine biosynthesis; L-histidine from 5-phospho-alpha-D-ribose 1-diphosphate: step 9/9. Its function is as follows. Catalyzes the sequential NAD-dependent oxidations of L-histidinol to L-histidinaldehyde and then to L-histidine. This is Histidinol dehydrogenase from Listeria monocytogenes serovar 1/2a (strain ATCC BAA-679 / EGD-e).